Reading from the N-terminus, the 185-residue chain is Ribosome-recycling factor (185 aa).

It belongs to the RRF family.

Its subcellular location is the cytoplasm. Responsible for the release of ribosomes from messenger RNA at the termination of protein biosynthesis. May increase the efficiency of translation by recycling ribosomes from one round of translation to another. The chain is Ribosome-recycling factor from Methylobacillus flagellatus (strain ATCC 51484 / DSM 6875 / VKM B-1610 / KT).